Consider the following 124-residue polypeptide: S-adenosylmethionine decarboxylase proenzyme (124 aa).

Residue serine 71 is the Schiff-base intermediate with substrate; via pyruvic acid of the active site. A Pyruvic acid (Ser); by autocatalysis modification is found at serine 71. Residue histidine 76 is the Proton acceptor; for processing activity of the active site. The active-site Proton donor; for catalytic activity is the cysteine 91.

The protein belongs to the prokaryotic AdoMetDC family. Type 1 subfamily. As to quaternary structure, heterotetramer of two alpha and two beta chains arranged as a dimer of alpha/beta heterodimers. The cofactor is pyruvate. Post-translationally, is synthesized initially as an inactive proenzyme. Formation of the active enzyme involves a self-maturation process in which the active site pyruvoyl group is generated from an internal serine residue via an autocatalytic post-translational modification. Two non-identical subunits are generated from the proenzyme in this reaction, and the pyruvate is formed at the N-terminus of the alpha chain, which is derived from the carboxyl end of the proenzyme. The post-translation cleavage follows an unusual pathway, termed non-hydrolytic serinolysis, in which the side chain hydroxyl group of the serine supplies its oxygen atom to form the C-terminus of the beta chain, while the remainder of the serine residue undergoes an oxidative deamination to produce ammonia and the pyruvoyl group blocking the N-terminus of the alpha chain.

It carries out the reaction S-adenosyl-L-methionine + H(+) = S-adenosyl 3-(methylsulfanyl)propylamine + CO2. It participates in amine and polyamine biosynthesis; S-adenosylmethioninamine biosynthesis; S-adenosylmethioninamine from S-adenosyl-L-methionine: step 1/1. With respect to regulation, competitively inhibited by methylglyoxal bis-guanylhydrazone. Irreversibly inhibited by NaBH(4) in vitro. Functionally, catalyzes the decarboxylation of S-adenosylmethionine to S-adenosylmethioninamine (dcAdoMet), the propylamine donor required for the synthesis of the polyamines spermine and spermidine from the diamine putrescine. Has no arginine decarboxylase (ArgDC) activity. This Saccharolobus solfataricus (strain ATCC 35092 / DSM 1617 / JCM 11322 / P2) (Sulfolobus solfataricus) protein is S-adenosylmethionine decarboxylase proenzyme (speH).